A 185-amino-acid chain; its full sequence is Ribosome-recycling factor (185 aa).

It belongs to the RRF family.

The protein localises to the cytoplasm. In terms of biological role, responsible for the release of ribosomes from messenger RNA at the termination of protein biosynthesis. May increase the efficiency of translation by recycling ribosomes from one round of translation to another. In Finegoldia magna (strain ATCC 29328 / DSM 20472 / WAL 2508) (Peptostreptococcus magnus), this protein is Ribosome-recycling factor.